Reading from the N-terminus, the 500-residue chain is Versicolorin B desaturase (500 aa).

The chain crosses the membrane as a helical span at residues 3–23 (FLSLPSLVIVIPVGYLLFHLG). N243 and N400 each carry an N-linked (GlcNAc...) asparagine glycan. C438 is a binding site for heme.

Belongs to the cytochrome P450 family. Heme serves as cofactor.

It localises to the membrane. It catalyses the reaction versicolorin B + NADPH + O2 + H(+) = versicolorin A + NADP(+) + 2 H2O. It functions in the pathway mycotoxin biosynthesis; aflatoxin biosynthesis. Versicolorin B desaturase; part of the gene cluster that mediates the biosynthesis of aflatoxins, a group of polyketide-derived furanocoumarins, and part of the most toxic and carcinogenic compounds among the known mycotoxins. The four major aflatoxins produced by A.parasiticus are aflatoxin B1 (AFB1), aflatoxin B2 (AFB2), aflatoxin G1 (AFG1) and aflatoxin G2 (AFG2). Within the aflatoxin pathway, the versicolorin B desaturase aflL catalyzes the conversion of versicolorin B (VERB) to versicolorin A (VERA). The biosynthesis of aflatoxins begins with the norsolorinic acid synthase aflC that combines a hexanoyl starter unit produced by the fatty acid synthase aflA/aflB and 7 malonyl-CoA extender units to synthesize the precursor NOR. The second step is the conversion of NOR to averantin and requires the norsolorinic acid ketoreductase aflD, which catalyzes the dehydration of norsolorinic acid to form (1'S)-averantin. The norsolorinic acid reductases aflE and aflF may also play a role in the conversion of NOR to AVN. The cytochrome P450 monooxygenase aflG then catalyzes the hydroxylation of AVN to 5'hydroxyaverantin (HAVN). The next step is performed by the 5'-hydroxyaverantin dehydrogenase aflH that transforms HAVN to 5'-oxoaverantin (OAVN) which is further converted to averufin (AVF) by aflK that plays a dual role in the pathway, as a 5'-oxoaverantin cyclase that mediates conversion of 5'-oxoaverantin, as well as a versicolorin B synthase in a later step in the pathway. The averufin oxidase aflI catalyzes the conversion of AVF to versiconal hemiacetal acetate (VHA). VHA is then the substrate for the versiconal hemiacetal acetate esterase aflJ to yield versiconal (VAL). Versicolorin B synthase aflK then converts VAL to versicolorin B (VERB) by closing the bisfuran ring of aflatoxin which is required for DNA-binding, thus giving to aflatoxin its activity as a mutagen. Then, the activity of the versicolorin B desaturase aflL leads to versicolorin A (VERA). A branch point starts from VERB since it can also be converted to dihydrodemethylsterigmatocystin (DMDHST), probably also by aflL, VERA being a precursor for aflatoxins B1 and G1, and DMDHST for aflatoxins B2 and G2. Next, the versicolorin reductase aflM and the cytochrome P450 monooxygenase aflN are involved in conversion of VERA to demethylsterigmatocystin (DMST). AflX and aflY seem also involved in this step, through probable aflX-mediated epoxide ring-opening step following versicolorin A oxidation and aflY-mediated Baeyer-Villiger oxidation required for the formation of the xanthone ring. The methyltransferase aflO then leads to the modification of DMST to sterigmatocystin (ST), and of DMDHST to dihydrosterigmatocystin (DHST). Both ST and DHST are then substrates of the O-methyltransferase aflP to yield O-methylsterigmatocystin (OMST) and dihydro-O-methylsterigmatocystin (DHOMST), respectively. Finally OMST is converted to aflatoxins B1 and G1, and DHOMST to aflatoxins B2 and G2, via the action of several enzymes including O-methylsterigmatocystin oxidoreductase aflQ, the cytochrome P450 monooxygenase aflU, but also the NADH-dependent flavin oxidoreductase nadA which is specifically required for the synthesis of AFG1. This is Versicolorin B desaturase from Aspergillus parasiticus (strain ATCC 56775 / NRRL 5862 / SRRC 143 / SU-1).